The following is a 332-amino-acid chain: MGIYMSQIVVCAMYKFVTLEDFEAMRQPLLDTMIKNNVKGTLLLANEGINGTVAGTRESIDNLLAYLKADPRLVDIDYKESYHQEMPFYRSKVKLKKEIVTLGIDEIDPNKICGKYVEPKDWNDLISDPETVLIDTRNEYEIEIGTFKNAINPHTENFREFPQYVDENLDPKKHKKVAMFCTGGIRCEKSTALLKAKGFDEVYHLKGGILKYLEEVPKEKSMWQGECFVFDSRVAVNHDLEKGNYDQCFACRMPITEDDKKRPEYVKGISCHHCYDKVTEKQKARFAEREKQSQLAAEKGFSHVGDEAKKLAQLNKQKKQQAKEAARKKAQQ.

The 95-residue stretch at 127–221 (SDPETVLIDT…YLEEVPKEKS (95 aa)) folds into the Rhodanese domain. C181 serves as the catalytic Cysteine persulfide intermediate. The interval 308–332 (AKKLAQLNKQKKQQAKEAARKKAQQ) is disordered. Residues 321–332 (QAKEAARKKAQQ) show a composition bias toward basic and acidic residues.

Belongs to the TrhO family.

It catalyses the reaction uridine(34) in tRNA + AH2 + O2 = 5-hydroxyuridine(34) in tRNA + A + H2O. Functionally, catalyzes oxygen-dependent 5-hydroxyuridine (ho5U) modification at position 34 in tRNAs. The sequence is that of tRNA uridine(34) hydroxylase from Francisella tularensis subsp. tularensis (strain FSC 198).